The primary structure comprises 148 residues: DNA-directed RNA polymerase II subunit GRINL1A, isoforms 4/5 (148 aa).

The segment at Met1 to Val66 is disordered. Low complexity predominate over residues Gly53–Val66.

This chain is DNA-directed RNA polymerase II subunit GRINL1A, isoforms 4/5 (POLR2M), found in Homo sapiens (Human).